The primary structure comprises 119 residues: UPF0102 protein Athe_0977 (119 aa).

Belongs to the UPF0102 family.

The sequence is that of UPF0102 protein Athe_0977 from Caldicellulosiruptor bescii (strain ATCC BAA-1888 / DSM 6725 / KCTC 15123 / Z-1320) (Anaerocellum thermophilum).